The following is a 172-amino-acid chain: Gamma-crystallin-4 (172 aa).

Beta/gamma crystallin 'Greek key' domains lie at 1–37 (IFFY…RVES) and 38–80 (GNWI…RFIP). Residues 81-85 (HPHSQ) form a connecting peptide region. 2 Beta/gamma crystallin 'Greek key' domains span residues 86 to 126 (YKMR…NVSD) and 127 to 169 (GHWM…RRVH).

This sequence belongs to the beta/gamma-crystallin family. In terms of assembly, monomer.

Its function is as follows. Crystallins are the dominant structural components of the vertebrate eye lens. In Xenopus laevis (African clawed frog), this protein is Gamma-crystallin-4 (cryg4).